Here is a 472-residue protein sequence, read N- to C-terminus: Argininosuccinate lyase (472 aa).

This sequence belongs to the lyase 1 family. Argininosuccinate lyase subfamily.

The protein localises to the cytoplasm. The catalysed reaction is 2-(N(omega)-L-arginino)succinate = fumarate + L-arginine. It participates in amino-acid biosynthesis; L-arginine biosynthesis; L-arginine from L-ornithine and carbamoyl phosphate: step 3/3. This is Argininosuccinate lyase from Mycobacterium avium (strain 104).